The following is a 712-amino-acid chain: Ribosomal RNA large subunit methyltransferase K/L (712 aa).

In terms of domain architecture, THUMP spans 46–157; the sequence is GAYQALLHSR…RENMVVSLDL (112 aa).

It belongs to the methyltransferase superfamily. RlmKL family.

Its subcellular location is the cytoplasm. The enzyme catalyses guanosine(2445) in 23S rRNA + S-adenosyl-L-methionine = N(2)-methylguanosine(2445) in 23S rRNA + S-adenosyl-L-homocysteine + H(+). It catalyses the reaction guanosine(2069) in 23S rRNA + S-adenosyl-L-methionine = N(2)-methylguanosine(2069) in 23S rRNA + S-adenosyl-L-homocysteine + H(+). In terms of biological role, specifically methylates the guanine in position 2445 (m2G2445) and the guanine in position 2069 (m7G2069) of 23S rRNA. The sequence is that of Ribosomal RNA large subunit methyltransferase K/L from Actinobacillus pleuropneumoniae serotype 7 (strain AP76).